Consider the following 200-residue polypeptide: H-2 class I histocompatibility antigen, Q9 alpha chain (200 aa).

The first 21 residues, 1-21, serve as a signal peptide directing secretion; that stretch reads MALTMLLLLVAAALTLIETRA. Residues 22-111 are alpha-1; that stretch reads GQHSLQYFHT…AQSYYNQSKG (90 aa). Over 22 to 200 the chain is Extracellular; it reads GQHSLQYFHT…RYLELGKETL (179 aa). The N-linked (GlcNAc...) asparagine glycan is linked to asparagine 107. The segment at 112–200 is alpha-2; it reads GSHTLQWMYG…RYLELGKETL (89 aa). The cysteines at positions 122 and 185 are disulfide-linked.

This sequence belongs to the MHC class I family. In terms of assembly, heterodimer of an alpha chain and a beta chain (beta-2-microglobulin).

It is found in the membrane. Its function is as follows. Involved in the presentation of foreign antigens to the immune system. The protein is H-2 class I histocompatibility antigen, Q9 alpha chain (H2-Q9) of Mus musculus (Mouse).